We begin with the raw amino-acid sequence, 253 residues long: MTYMQLRSSTKKVKINEANNMAVVFEKNKPPSSIKRAELKTVLIPKPIIKKGIICGLEKYAAIYKAIAKHPLVLGKCPSRPYHTINVMTKSQNALILTPSMDINKTQHLLLKHSLLDYIGLKSNMAQFEALYGSVLEPMTSKEMLSFQDLFFETKRRTEDIIFVLNTICEHRFVHPVRASVTPQVFKDIVEKYFFLFPAKDKSNSINFAASVVEIICNGEPFSKVIQYVNAYMDIKEHTTMNNLIKIYALLTT.

This sequence belongs to the herpesviridae BTRF1 family.

This is an uncharacterized protein from Saimiriine herpesvirus 2 (strain 11) (SaHV-2).